A 676-amino-acid polypeptide reads, in one-letter code: Mediator of RNA polymerase II transcription subunit 17 (676 aa).

Disordered stretches follow at residues 27 to 68 (IGSK…QFSN) and 117 to 176 (IEND…TQDT). A compositionally biased stretch (low complexity) spans 29 to 40 (SKSTSPHSNSTS). 2 stretches are compositionally biased toward basic and acidic residues: residues 47-56 (HNTENEEVDN) and 120-134 (DNGK…KAED). Residues 135 to 145 (GIDTMDIDQND) are compositionally biased toward acidic residues. The segment covering 146–160 (NSEANTNDIGYNEWS) has biased composition (polar residues).

It belongs to the Mediator complex subunit 17 family. In terms of assembly, component of the Mediator complex.

The protein localises to the nucleus. Its function is as follows. Component of the Mediator complex, a coactivator involved in the regulated transcription of nearly all RNA polymerase II-dependent genes. Mediator functions as a bridge to convey information from gene-specific regulatory proteins to the basal RNA polymerase II transcription machinery. Mediator is recruited to promoters by direct interactions with regulatory proteins and serves as a scaffold for the assembly of a functional preinitiation complex with RNA polymerase II and the general transcription factors. In Candida glabrata (strain ATCC 2001 / BCRC 20586 / JCM 3761 / NBRC 0622 / NRRL Y-65 / CBS 138) (Yeast), this protein is Mediator of RNA polymerase II transcription subunit 17 (SRB4).